The primary structure comprises 487 residues: Malonate-semialdehyde dehydrogenase 2 (487 aa).

5 residues coordinate NAD(+): phenylalanine 154, lysine 178, glutamate 181, arginine 182, and serine 231. Cysteine 286 functions as the Nucleophile in the catalytic mechanism. Glutamate 386 is an NAD(+) binding site.

Belongs to the aldehyde dehydrogenase family. IolA subfamily. In terms of assembly, homotetramer.

The catalysed reaction is 3-oxopropanoate + NAD(+) + CoA + H2O = hydrogencarbonate + acetyl-CoA + NADH + H(+). The enzyme catalyses 2-methyl-3-oxopropanoate + NAD(+) + CoA + H2O = propanoyl-CoA + hydrogencarbonate + NADH + H(+). It participates in polyol metabolism; myo-inositol degradation into acetyl-CoA; acetyl-CoA from myo-inositol: step 7/7. Catalyzes the oxidation of malonate semialdehyde (MSA) and methylmalonate semialdehyde (MMSA) into acetyl-CoA and propanoyl-CoA, respectively. Is involved in a myo-inositol catabolic pathway. Bicarbonate, and not CO2, is the end-product of the enzymatic reaction. In Bacillus thuringiensis (strain Al Hakam), this protein is Malonate-semialdehyde dehydrogenase 2.